The following is a 238-amino-acid chain: Arginine ABC transporter permease protein ArtQ (238 aa).

Residues 1 to 14 (MNEFFPLASAAGMT) are Periplasmic-facing. Residues 11-223 (AGMTVGLAVC…VITLLSQYIL (213 aa)) enclose the ABC transmembrane type-1 domain. Residues 15–35 (VGLAVCALIVGLALAMFFAVW) form a helical membrane-spanning segment. Over 36-48 (ESAKWRPVAWAGS) the chain is Cytoplasmic. Residues 49–69 (ALVTILRGLPEILVVLFIYFG) form a helical membrane-spanning segment. The Periplasmic segment spans residues 70–98 (SSQLLLTLSDGFTINLGFVQIPVQMDIEN). The chain crosses the membrane as a helical span at residues 99–119 (FDVSPFLCGVIALSLLYAAYA). Over 120–168 (SQTLRGALKAVPVGQWESGQALGLSKSAIFFRLVMPQMWRHALPGLGNQ) the chain is Cytoplasmic. The helical transmembrane segment at 169 to 189 (WLVLLKDTALVSLISVNDLML) threads the bilayer. Residues 190–201 (QTKSIATRTQEP) are Periplasmic-facing. Residues 202 to 222 (FTWYIVAAAIYLVITLLSQYI) form a helical membrane-spanning segment. Topologically, residues 223–238 (LKRIDLRATRFERRPS) are cytoplasmic.

Belongs to the binding-protein-dependent transport system permease family. HisMQ subfamily. As to quaternary structure, the complex is composed of two ATP-binding proteins (ArtP), two transmembrane proteins (ArtM and ArtQ) and two solute-binding proteins (ArtJ and ArtI).

The protein localises to the cell inner membrane. Its function is as follows. Part of the ABC transporter complex ArtPIQMJ involved in arginine transport. Probably responsible for the translocation of the substrate across the membrane. This is Arginine ABC transporter permease protein ArtQ (artQ) from Escherichia coli O6:H1 (strain CFT073 / ATCC 700928 / UPEC).